A 364-amino-acid chain; its full sequence is 3-isopropylmalate dehydrogenase (364 aa).

79 to 92 is an NAD(+) binding site; sequence GPKWNNINETSRPE. Residues Arg100, Arg110, Arg139, and Asp228 each contribute to the substrate site. The Mg(2+) site is built by Asp228, Asp252, and Asp256. 286 to 298 is a binding site for NAD(+); it reads GSAPDIAGKNIAN.

The protein belongs to the isocitrate and isopropylmalate dehydrogenases family. LeuB type 1 subfamily. In terms of assembly, homodimer. Requires Mg(2+) as cofactor. It depends on Mn(2+) as a cofactor.

It is found in the cytoplasm. The catalysed reaction is (2R,3S)-3-isopropylmalate + NAD(+) = 4-methyl-2-oxopentanoate + CO2 + NADH. It participates in amino-acid biosynthesis; L-leucine biosynthesis; L-leucine from 3-methyl-2-oxobutanoate: step 3/4. Catalyzes the oxidation of 3-carboxy-2-hydroxy-4-methylpentanoate (3-isopropylmalate) to 3-carboxy-4-methyl-2-oxopentanoate. The product decarboxylates to 4-methyl-2 oxopentanoate. In Blochmanniella floridana, this protein is 3-isopropylmalate dehydrogenase.